A 401-amino-acid polypeptide reads, in one-letter code: Argininosuccinate synthase (401 aa).

Position 9 to 17 (Ala9 to Ser17) interacts with ATP. Tyr88 serves as a coordination point for L-citrulline. An ATP-binding site is contributed by Gly118. Residues Thr120, Asn124, and Asp125 each coordinate L-aspartate. L-citrulline is bound at residue Asn124. The L-citrulline site is built by Arg128, Ser176, Ser185, Glu261, and Tyr273.

This sequence belongs to the argininosuccinate synthase family. Type 1 subfamily. Homotetramer.

Its subcellular location is the cytoplasm. The enzyme catalyses L-citrulline + L-aspartate + ATP = 2-(N(omega)-L-arginino)succinate + AMP + diphosphate + H(+). It functions in the pathway amino-acid biosynthesis; L-arginine biosynthesis; L-arginine from L-ornithine and carbamoyl phosphate: step 2/3. This Symbiobacterium thermophilum (strain DSM 24528 / JCM 14929 / IAM 14863 / T) protein is Argininosuccinate synthase.